Reading from the N-terminus, the 94-residue chain is MLKPLGNRVIIEKKEQEQAAKSGIVLTDSAKEKSNEGVIIAVGQGRLLDNGTQVAPQVSEGDTIVFQQYAGTEVKRGAQTYLILNEEDILAIIE.

This sequence belongs to the GroES chaperonin family. In terms of assembly, heptamer of 7 subunits arranged in a ring. Interacts with the chaperonin GroEL.

It is found in the cytoplasm. Its function is as follows. Together with the chaperonin GroEL, plays an essential role in assisting protein folding. The GroEL-GroES system forms a nano-cage that allows encapsulation of the non-native substrate proteins and provides a physical environment optimized to promote and accelerate protein folding. GroES binds to the apical surface of the GroEL ring, thereby capping the opening of the GroEL channel. This Staphylococcus epidermidis protein is Co-chaperonin GroES.